The primary structure comprises 469 residues: MLPTLVLVGRPNVGKSTLFNRLTGTRDALVHDLPGMTRDRHYGRGRIGGKPYLVVDTGGLEPVVKDGILAEMARQTLQAIDEADAIIFMVDARAGVTPQDKVIADRLRRVTSPVLLAVNKAEGMNRAVVTAEFHELGLGEPLAISGAHGDGIADLVAEALAPFPEEEEASDDFGVPKIALVGRPNVGKSTLVNALVGAERVIAFDQPGTTRDSIYVDFERGGKPYVLIDTAGVRRRGKVFETVEKFSVIKTLQAIEDANVVVLVLDARENISEQDAHLAGFVLETGRALVVAINKWDGLSAEQRDDVKRDIGRKLAFLDFARFNYISALKAKGLENLLKDIEAAHAAAFIKLSTPKLTRVLEMAVEQHAPPKNGLFRPKPRYAHQGGKNPPVIVLHGNALEGLRDDYKRYLESSFRKAFKLQGTPLRIQIKEDEGKNPFEGKKRAPLSESEATRMRRKKRVRRKVYGAD.

EngA-type G domains follow at residues 3–167 (PTLV…PEEE) and 176–349 (PKIA…AAAF). GTP-binding positions include 9–16 (GRPNVGKS), 56–60 (DTGGL), 119–122 (NKAE), 182–189 (GRPNVGKS), 229–233 (DTAGV), and 294–297 (NKWD). The KH-like domain maps to 350 to 436 (IKLSTPKLTR…RIQIKEDEGK (87 aa)). Residues 432–443 (EDEGKNPFEGKK) show a composition bias toward basic and acidic residues. Residues 432–469 (EDEGKNPFEGKKRAPLSESEATRMRRKKRVRRKVYGAD) are disordered. Basic residues predominate over residues 455 to 469 (MRRKKRVRRKVYGAD).

It belongs to the TRAFAC class TrmE-Era-EngA-EngB-Septin-like GTPase superfamily. EngA (Der) GTPase family. Associates with the 50S ribosomal subunit.

Its function is as follows. GTPase that plays an essential role in the late steps of ribosome biogenesis. This is GTPase Der from Thiobacillus denitrificans (strain ATCC 25259 / T1).